A 137-amino-acid polypeptide reads, in one-letter code: Histone H2B (137 aa).

Positions 1 to 10 are enriched in basic and acidic residues; the sequence is MPPKAADKKP. The disordered stretch occupies residues 1-45; that stretch reads MPPKAADKKPASKAPATASKAPEKKDAGKKTAASGDKKKRTKTRK. N6-acetyllysine; alternate is present on residues lysine 8 and lysine 9. Glycyl lysine isopeptide (Lys-Gly) (interchain with G-Cter in SUMO); alternate cross-links involve residues lysine 8 and lysine 9. Phosphoserine is present on serine 12. Residue lysine 13 is modified to N6-acetyllysine. Lysine 24 carries the post-translational modification N6-acetyllysine; alternate. Lysine 24 is covalently cross-linked (Glycyl lysine isopeptide (Lys-Gly) (interchain with G-Cter in SUMO); alternate). A Glycyl lysine isopeptide (Lys-Gly) (interchain with G-Cter in SUMO) cross-link involves residue lysine 25. A Glycyl lysine isopeptide (Lys-Gly) (interchain with G-Cter in ubiquitin) cross-link involves residue lysine 131.

This sequence belongs to the histone H2B family. The nucleosome is a histone octamer containing two molecules each of H2A, H2B, H3 and H4 assembled in one H3-H4 heterotetramer and two H2A-H2B heterodimers. The octamer wraps approximately 147 bp of DNA. In terms of processing, monoubiquitinated by the UBC2-BRE1 complex to form H2BK123ub1. H2BK123ub1 gives a specific tag for epigenetic transcriptional activation and is also prerequisite for H3K4me and H3K79me formation. H2BK123ub1 also modulates the formation of double-strand breaks during meiosis and is a prerequisite for DNA-damage checkpoint activation. Phosphorylated by STE20 to form H2BS10ph during progression through meiotic prophase. May be correlated with chromosome condensation. Post-translationally, acetylated by GCN5 to form H2BK11ac and H2BK16ac. H2BK16ac can also be formed by ESA1. Acetylation of N-terminal lysines and particularly formation of H2BK11acK16ac has a positive effect on transcription. In terms of processing, sumoylation to form H2BK6su or H2BK7su, and probably also H2BK16su or H2BK17su, occurs preferentially near the telomeres and represses gene transcription.

It localises to the nucleus. The protein localises to the chromosome. Its function is as follows. Core component of nucleosome. Nucleosomes wrap and compact DNA into chromatin, limiting DNA accessibility to the cellular machineries which require DNA as a template. Histones thereby play a central role in transcription regulation, DNA repair, DNA replication and chromosomal stability. DNA accessibility is regulated via a complex set of post-translational modifications of histones, also called histone code, and nucleosome remodeling. In Pyricularia oryzae (strain Y34) (Rice blast fungus), this protein is Histone H2B (HTB1).